A 269-amino-acid polypeptide reads, in one-letter code: Shikimate dehydrogenase (NADP(+)) (269 aa).

Shikimate is bound by residues 17-19 (SKS) and Thr-64. Lys-68 (proton acceptor) is an active-site residue. Position 80 (Asp-80) interacts with NADP(+). The shikimate site is built by Asn-89 and Asp-105. Residues 130–134 (GAGGA), 154–159 (NRTHAK), and Met-213 contribute to the NADP(+) site. Position 215 (Tyr-215) interacts with shikimate. Gly-237 contacts NADP(+).

Belongs to the shikimate dehydrogenase family. As to quaternary structure, homodimer.

It catalyses the reaction shikimate + NADP(+) = 3-dehydroshikimate + NADPH + H(+). It participates in metabolic intermediate biosynthesis; chorismate biosynthesis; chorismate from D-erythrose 4-phosphate and phosphoenolpyruvate: step 4/7. Its function is as follows. Involved in the biosynthesis of the chorismate, which leads to the biosynthesis of aromatic amino acids. Catalyzes the reversible NADPH linked reduction of 3-dehydroshikimate (DHSA) to yield shikimate (SA). In Neisseria polysaccharea, this protein is Shikimate dehydrogenase (NADP(+)).